The sequence spans 490 residues: Probable G-protein coupled receptor npr-8 (490 aa).

The Extracellular segment spans residues 1 to 55 (MEVKDIDNYCDRGISPNASNYLTYPFDGLCLQKFFYQLQTSLRRFTPYEEIIYTT). Asn17 carries N-linked (GlcNAc...) asparagine glycosylation. Residues 56–76 (VYIIISVAAVIGNGLVIMAVV) form a helical membrane-spanning segment. Residues 77-86 (RKKTMRTNRN) lie on the Cytoplasmic side of the membrane. A helical membrane pass occupies residues 87–107 (VLILNLALSNLILAITNIPFL). Topologically, residues 108 to 125 (WLPSIDFEFPYSRFFCKF) are extracellular. Residues 126 to 146 (ANVLPGSNIYCSTLTISVMAI) form a helical membrane-spanning segment. Over 147-166 (DRYYSVKKLKIASNRKQCFH) the chain is Cytoplasmic. A helical transmembrane segment spans residues 167-187 (AVLVSLAIWIVSFILSLPLLL). At 188–236 (YYETSMLYVMREIRVVDQSGQEVIRSYGWRQCRLVSAGRLPDITQSIQL) the chain is on the extracellular side. The helical transmembrane segment at 237–257 (LMSILQVAFLYIVPLFVLSIF) threads the bilayer. Topologically, residues 258 to 331 (NVKLTRFLKT…QRTNRTTSLL (74 aa)) are cytoplasmic. The tract at residues 272–322 (MSKTRAPPKRFDRSDSHHNSLKNNNNHTSSLRSPSMPSIRSSITERNKTNQ) is disordered. Basic and acidic residues predominate over residues 280-289 (KRFDRSDSHH). A compositionally biased stretch (low complexity) spans 292–313 (LKNNNNHTSSLRSPSMPSIRSS). Residues 332–352 (IAMAGSYAALWFPFTLITFLI) traverse the membrane as a helical segment. At 353 to 374 (DFELIINQDYVNLVERIDQTCK) the chain is on the extracellular side. Residues 375-395 (MVSMLSICVNPFLYGFLNTNF) traverse the membrane as a helical segment. The Cytoplasmic segment spans residues 396–490 (RHEFSDIYYR…DDDIEKDSFV (95 aa)).

It belongs to the G-protein coupled receptor 1 family.

The protein resides in the cell membrane. Its function is as follows. Not known. Putative receptor. The polypeptide is Probable G-protein coupled receptor npr-8 (Caenorhabditis elegans).